Reading from the N-terminus, the 139-residue chain is Protein archease (139 aa).

Ca(2+) contacts are provided by Asp12, Asp138, and Ile139.

The protein belongs to the archease family.

Its function is as follows. Activates the tRNA-splicing ligase complex by facilitating the enzymatic turnover of catalytic subunit RtcB. Acts by promoting the guanylylation of RtcB, a key intermediate step in tRNA ligation. Can also alter the NTP specificity of RtcB such that ATP, dGTP or ITP is used efficiently. This Saccharolobus islandicus (strain L.S.2.15 / Lassen #1) (Sulfolobus islandicus) protein is Protein archease.